Here is a 480-residue protein sequence, read N- to C-terminus: Argininosuccinate lyase (480 aa).

The disordered stretch occupies residues 1 to 20 (MTQQDGGQAGQAEPTKLWGG).

Belongs to the lyase 1 family. Argininosuccinate lyase subfamily.

It localises to the cytoplasm. It carries out the reaction 2-(N(omega)-L-arginino)succinate = fumarate + L-arginine. Its pathway is amino-acid biosynthesis; L-arginine biosynthesis; L-arginine from L-ornithine and carbamoyl phosphate: step 3/3. The sequence is that of Argininosuccinate lyase from Saccharopolyspora erythraea (strain ATCC 11635 / DSM 40517 / JCM 4748 / NBRC 13426 / NCIMB 8594 / NRRL 2338).